Here is a 272-residue protein sequence, read N- to C-terminus: Dermonecrotic toxin LvSicTox-alphaIC1bii (272 aa).

The active site involves H5. The Mg(2+) site is built by E25 and D27. H41 serves as the catalytic Nucleophile. Disulfide bonds link C45–C51 and C47–C189. D84 lines the Mg(2+) pocket.

It belongs to the arthropod phospholipase D family. Class II subfamily. It depends on Mg(2+) as a cofactor. As to expression, expressed by the venom gland.

The protein localises to the secreted. The enzyme catalyses an N-(acyl)-sphingosylphosphocholine = an N-(acyl)-sphingosyl-1,3-cyclic phosphate + choline. The catalysed reaction is an N-(acyl)-sphingosylphosphoethanolamine = an N-(acyl)-sphingosyl-1,3-cyclic phosphate + ethanolamine. It catalyses the reaction a 1-acyl-sn-glycero-3-phosphocholine = a 1-acyl-sn-glycero-2,3-cyclic phosphate + choline. It carries out the reaction a 1-acyl-sn-glycero-3-phosphoethanolamine = a 1-acyl-sn-glycero-2,3-cyclic phosphate + ethanolamine. Functionally, dermonecrotic toxins cleave the phosphodiester linkage between the phosphate and headgroup of certain phospholipids (sphingolipid and lysolipid substrates), forming an alcohol (often choline) and a cyclic phosphate. This toxin acts on sphingomyelin (SM). It may also act on ceramide phosphoethanolamine (CPE), lysophosphatidylcholine (LPC) and lysophosphatidylethanolamine (LPE), but not on lysophosphatidylserine (LPS), and lysophosphatidylglycerol (LPG). It acts by transphosphatidylation, releasing exclusively cyclic phosphate products as second products. Induces dermonecrosis, hemolysis, increased vascular permeability, edema, inflammatory response, and platelet aggregation. The chain is Dermonecrotic toxin LvSicTox-alphaIC1bii from Loxosceles variegata (Recluse spider).